Here is a 499-residue protein sequence, read N- to C-terminus: Protein SENSITIVE TO PROTON RHIZOTOXICITY 1 (499 aa).

The tract at residues 1-31 (METEDDLCNTNWGSSSSKSREPGSSDCGNST) is disordered. Residues 244-266 (HFCTICGKGFKRDANLRMHMRGH) form a C2H2-type 1 zinc finger. The segment at 354–385 (KHCGKNKWLCSCGTTFSRKDKLFGHIALFQGH) adopts a C2H2-type 2; atypical zinc-finger fold. The tract at residues 390 to 436 (PLEETKPSASTSTQRGSSEGGNNNQGMVGFNLGSASNANQETTQPGM) is disordered. Polar residues-rich tracts occupy residues 396–415 (PSAS…NNQG) and 422–435 (GSAS…TQPG).

In terms of tissue distribution, expressed in roots (e.g. root tips and lateral roots), leaves, flowers (e.g. stigma, sepal, anther, and filament), stems, siliques and cotyledons.

The protein localises to the nucleus. Its function is as follows. Probable transcription factor. Together with STOP2, plays a critical role in tolerance to major stress factors in acid soils such as proton H(+) and aluminum ion Al(3+). Required for the expression of genes in response to acidic stress (e.g. ALMT1 and MATE), and Al-activated citrate exudation. This Arabidopsis thaliana (Mouse-ear cress) protein is Protein SENSITIVE TO PROTON RHIZOTOXICITY 1.